A 190-amino-acid chain; its full sequence is GTP cyclohydrolase 1 (190 aa).

Residues Cys75, His78, and Cys146 each contribute to the Zn(2+) site.

It belongs to the GTP cyclohydrolase I family. As to quaternary structure, toroid-shaped homodecamer, composed of two pentamers of five dimers.

The enzyme catalyses GTP + H2O = 7,8-dihydroneopterin 3'-triphosphate + formate + H(+). It functions in the pathway cofactor biosynthesis; 7,8-dihydroneopterin triphosphate biosynthesis; 7,8-dihydroneopterin triphosphate from GTP: step 1/1. This chain is GTP cyclohydrolase 1, found in Campylobacter jejuni subsp. doylei (strain ATCC BAA-1458 / RM4099 / 269.97).